Reading from the N-terminus, the 678-residue chain is Methionine--tRNA ligase (678 aa).

The 'HIGH' region motif lies at 14 to 24 (PYANGSIHLGH). Zn(2+)-binding residues include Cys145, Cys148, Cys158, and Cys161. Positions 331-335 (KMSKS) match the 'KMSKS' region motif. Lys334 contributes to the ATP binding site. One can recognise a tRNA-binding domain in the interval 576–678 (AFAAVDLRIA…SGAKPGQRVK (103 aa)).

The protein belongs to the class-I aminoacyl-tRNA synthetase family. MetG type 1 subfamily. In terms of assembly, homodimer. Zn(2+) serves as cofactor.

The protein localises to the cytoplasm. The catalysed reaction is tRNA(Met) + L-methionine + ATP = L-methionyl-tRNA(Met) + AMP + diphosphate. Is required not only for elongation of protein synthesis but also for the initiation of all mRNA translation through initiator tRNA(fMet) aminoacylation. This is Methionine--tRNA ligase from Pseudomonas aeruginosa (strain UCBPP-PA14).